A 148-amino-acid polypeptide reads, in one-letter code: MKVIFTQDVKGKGKKGEVKDVPVGYANNFLFKKNVAVEATPGNLKQLQQQNKHAEQEREQEIEDAKALKKKLEDIEVEVTAKSGEGGKLFGSVSAKQIAQALQKQHDIKIDKRKMDLPNGIHALGYTNVPVKLDKEVDGTIRVHTVEQ.

A disordered region spans residues 46–65 (QLQQQNKHAEQEREQEIEDA). Positions 52-65 (KHAEQEREQEIEDA) are enriched in basic and acidic residues.

It belongs to the bacterial ribosomal protein bL9 family.

Its function is as follows. Binds to the 23S rRNA. The chain is Large ribosomal subunit protein bL9 from Staphylococcus carnosus (strain TM300).